The primary structure comprises 473 residues: Mannose-1-phosphate guanylyltransferase (473 aa).

Belongs to the mannose-6-phosphate isomerase type 2 family. As to quaternary structure, homodimer.

It carries out the reaction alpha-D-mannose 1-phosphate + GTP + H(+) = GDP-alpha-D-mannose + diphosphate. It functions in the pathway nucleotide-sugar biosynthesis; GDP-alpha-D-mannose biosynthesis; GDP-alpha-D-mannose from alpha-D-mannose 1-phosphate (GTP route): step 1/1. The protein operates within bacterial outer membrane biogenesis; LPS O-antigen biosynthesis. Its function is as follows. Involved in GDP-mannose biosynthesis which serves as the activated sugar nucleotide precursor for mannose residues in cell surface polysaccharides. This enzyme participates in synthesis of the LPS group C2 O antigen. This is Mannose-1-phosphate guanylyltransferase (rfbM) from Salmonella muenchen.